Here is a 407-residue protein sequence, read N- to C-terminus: Arylacetamide deacetylase-like 3 (407 aa).

Positions 119–121 (HGG) match the Involved in the stabilization of the negatively charged intermediate by the formation of the oxyanion hole motif. Catalysis depends on residues S193, D347, and H377.

It belongs to the 'GDXG' lipolytic enzyme family.

In Homo sapiens (Human), this protein is Arylacetamide deacetylase-like 3 (AADACL3).